The chain runs to 957 residues: Glycine dehydrogenase (decarboxylating) (957 aa).

Lysine 708 bears the N6-(pyridoxal phosphate)lysine mark.

The protein belongs to the GcvP family. As to quaternary structure, the glycine cleavage system is composed of four proteins: P, T, L and H. It depends on pyridoxal 5'-phosphate as a cofactor.

The catalysed reaction is N(6)-[(R)-lipoyl]-L-lysyl-[glycine-cleavage complex H protein] + glycine + H(+) = N(6)-[(R)-S(8)-aminomethyldihydrolipoyl]-L-lysyl-[glycine-cleavage complex H protein] + CO2. Its function is as follows. The glycine cleavage system catalyzes the degradation of glycine. The P protein binds the alpha-amino group of glycine through its pyridoxal phosphate cofactor; CO(2) is released and the remaining methylamine moiety is then transferred to the lipoamide cofactor of the H protein. This Escherichia coli (strain K12 / MC4100 / BW2952) protein is Glycine dehydrogenase (decarboxylating).